The sequence spans 125 residues: Multifunctional methyltransferase subunit TRM112-like protein (125 aa).

A TRM112 domain is found at 2–119 (KLLTHNLLSS…SRGIPNMLLN (118 aa)).

Belongs to the TRM112 family. As to quaternary structure, part of the heterodimeric BUD23-TRM112 methyltransferase complex; this heterodimerization is necessary for the metabolic stability and activity of the catalytic subunit BUD23. Part of the heterodimeric N6AMT1-TRM112 methyltransferase complex; this heterodimerization is necessary for S-adenosyl-L-methionine-binding to N6AMT1/HEMK2. Part of the heterodimeric ALKBH8-TRM112 methyltransferase complex. Part of the heterodimeric METTL5-TRM112 methyltransferase complex; this heterodimerization is necessary for the stability of the catalytic subunit METTL5. Part of the heterodimeric THUMPD3-TRM112 methyltransferase complex; this complex forms an active tRNA methyltransferase, where TRMT112 acts as an activator of the catalytic subunit THUMPD3. Part of the heterodimeric THUMPD2-TRM112 methyltransferase complex; this complex forms an active tRNA methyltransferase, where TRMT112 acts as an activator of the catalytic subunit THUMPD2. Part of the heterodimeric TRMT11-TRM112 methyltransferase complex; this complex forms an active tRNA methyltransferase, where TRMT112 acts as an activator of the catalytic subunit TRMT11. As to expression, abundantly expressed in the testis, also expressed in the brain, heart, kidney, liver, lung, muscle and spleen.

It localises to the nucleus. Its subcellular location is the nucleoplasm. The protein resides in the cytoplasm. The protein localises to the perinuclear region. Acts as an activator of both rRNA/tRNA and protein methyltransferases. Together with methyltransferase BUD23, methylates the N(7) position of a guanine in 18S rRNA. The heterodimer with HEMK2/N6AMT1 catalyzes N5-methylation of ETF1 on 'Gln-185', using S-adenosyl L-methionine as methyl donor. The heterodimer with ALKBH8 catalyzes the methylation of 5-carboxymethyl uridine to 5-methylcarboxymethyl uridine at the wobble position of the anticodon loop in target tRNA species. Together with methyltransferase THUMPD3, catalyzes the formation of N(2)-methylguanosine at position 6 in a broad range of tRNA substrates and at position 7 of tRNA(Trp). Involved in the pre-rRNA processing steps leading to small-subunit rRNA production. Together with methyltransferase METTL5, specifically methylates the 6th position of adenine in position 1832 of 18S rRNA. The sequence is that of Multifunctional methyltransferase subunit TRM112-like protein (Trmt112) from Mus musculus (Mouse).